The following is a 934-amino-acid chain: Oxysterol-binding protein-related protein 6 (934 aa).

Positions 1 to 62 are disordered; it reads MSSDEKGISP…RQLLEPEPVP (62 aa). Ser2 carries the post-translational modification N-acetylserine. Over residues 14–29 the composition is skewed to low complexity; sequence TSTPTHRSASSSTSSQ. Basic and acidic residues predominate over residues 30–40; it reads RDSRQSIHILE. At Ser35 the chain carries Phosphoserine. Over residues 42–53 the composition is skewed to polar residues; sequence TASSSTEPSVSR. The 96-residue stretch at 86-181 folds into the PH domain; that stretch reads PDKHEGFMLK…WVSKLRHHRL (96 aa). Ser190 and Ser290 each carry phosphoserine.

Belongs to the OSBP family. As to quaternary structure, homodimer. Interacts with OSBPL3. As to expression, expressed in brain and striated muscle (at protein level). Widely expressed. Expressed in skeletal muscle.

Its subcellular location is the cytoplasm. The protein localises to the cytosol. It is found in the endoplasmic reticulum membrane. The protein resides in the nucleus envelope. It localises to the cell membrane. Its subcellular location is the endosome membrane. Regulates cellular transport and efflux of cholesterol. Plays a role in phosphatidylinositol-4-phophate (PI4P) turnover at the neuronal membrane. Binds via its PH domain PI4P, phosphatidylinositol-4,5-diphosphate, phosphatidylinositol-3,4,5-triphosphate, and phosphatidic acid. Weakly binds 25-hydroxycholesterol. This Homo sapiens (Human) protein is Oxysterol-binding protein-related protein 6 (OSBPL6).